A 469-amino-acid polypeptide reads, in one-letter code: 3-isopropylmalate dehydratase large subunit (469 aa).

Residues C347, C410, and C413 each contribute to the [4Fe-4S] cluster site.

It belongs to the aconitase/IPM isomerase family. LeuC type 1 subfamily. As to quaternary structure, heterodimer of LeuC and LeuD. [4Fe-4S] cluster serves as cofactor.

It catalyses the reaction (2R,3S)-3-isopropylmalate = (2S)-2-isopropylmalate. Its pathway is amino-acid biosynthesis; L-leucine biosynthesis; L-leucine from 3-methyl-2-oxobutanoate: step 2/4. In terms of biological role, catalyzes the isomerization between 2-isopropylmalate and 3-isopropylmalate, via the formation of 2-isopropylmaleate. This chain is 3-isopropylmalate dehydratase large subunit, found in Burkholderia mallei (strain NCTC 10247).